The primary structure comprises 150 residues: D-aminoacyl-tRNA deacylase (150 aa).

A Gly-cisPro motif, important for rejection of L-amino acids motif is present at residues 137 to 138 (GP).

The protein belongs to the DTD family. As to quaternary structure, homodimer.

Its subcellular location is the cytoplasm. The catalysed reaction is glycyl-tRNA(Ala) + H2O = tRNA(Ala) + glycine + H(+). It catalyses the reaction a D-aminoacyl-tRNA + H2O = a tRNA + a D-alpha-amino acid + H(+). An aminoacyl-tRNA editing enzyme that deacylates mischarged D-aminoacyl-tRNAs. Also deacylates mischarged glycyl-tRNA(Ala), protecting cells against glycine mischarging by AlaRS. Acts via tRNA-based rather than protein-based catalysis; rejects L-amino acids rather than detecting D-amino acids in the active site. By recycling D-aminoacyl-tRNA to D-amino acids and free tRNA molecules, this enzyme counteracts the toxicity associated with the formation of D-aminoacyl-tRNA entities in vivo and helps enforce protein L-homochirality. This chain is D-aminoacyl-tRNA deacylase, found in Geotalea daltonii (strain DSM 22248 / JCM 15807 / FRC-32) (Geobacter daltonii).